A 449-amino-acid polypeptide reads, in one-letter code: Trigger factor (449 aa).

A PPIase FKBP-type domain is found at 162–243 (GEFVTINITA…ITATKQRELP (82 aa)). The segment covering 428 to 437 (GNEIDPKEYF) has biased composition (basic and acidic residues). A disordered region spans residues 428–449 (GNEIDPKEYFGEEEVAETESEA). A compositionally biased stretch (acidic residues) spans 438–449 (GEEEVAETESEA).

Belongs to the FKBP-type PPIase family. Tig subfamily.

The protein resides in the cytoplasm. The catalysed reaction is [protein]-peptidylproline (omega=180) = [protein]-peptidylproline (omega=0). Its function is as follows. Involved in protein export. Acts as a chaperone by maintaining the newly synthesized protein in an open conformation. Functions as a peptidyl-prolyl cis-trans isomerase. The protein is Trigger factor of Corynebacterium glutamicum (strain R).